We begin with the raw amino-acid sequence, 1460 residues long: CLIP-associating protein 1-A (1460 aa).

HEAT repeat units follow at residues 87-124 (TQLG…QASN) and 163-200 (LTLS…HVGE). The tract at residues 237–293 (SDKNFDDEDSVDGNRPSSASSSASSKAPQTARRGVSLGTARRPGPSSAAAKTGGTAK) is disordered. Positions 279–293 (PGPSSAAAKTGGTAK) are enriched in low complexity. HEAT repeat units lie at residues 407–442 (HGAE…IRHT) and 443–479 (HVPR…EWQT). 3 disordered regions span residues 545 to 605 (SDSI…IDVN), 640 to 733 (IRTR…RFGI), and 778 to 800 (PYGM…ERSY). Positions 550 to 569 (SLPQSDRSSSSSQESLNRPL) are enriched in low complexity. Residues 571–597 (TKRSPTGSTVSRASSTTSKSTPGSLQR) are compositionally biased toward polar residues. The segment covering 645 to 659 (QSSGSTTSTASTPAD) has biased composition (low complexity). Composition is skewed to polar residues over residues 669–681 (VSQS…SNSP) and 715–724 (QGCSRETSPS). Low complexity predominate over residues 789–800 (SDASSACSERSY). An HEAT 5 repeat occupies 942–979 (FIVDQTQTPNLKVKVAILKYIESLARQMDPTDFVNSSE). The interval 1041–1084 (LKNSSNSSMGSPSNTIGRTPSRHSSSRASPLTSPTNCSHGGLSP) is disordered. Low complexity predominate over residues 1042–1054 (KNSSNSSMGSPSN). Over residues 1066 to 1078 (SRASPLTSPTNCS) the composition is skewed to polar residues. HEAT repeat units lie at residues 1272-1309 (LLLE…YAEL) and 1390-1427 (GLLQ…YLAQ).

This sequence belongs to the CLASP family.

The protein resides in the cytoplasm. It localises to the cytoskeleton. Its subcellular location is the microtubule organizing center. It is found in the centrosome. The protein localises to the chromosome. The protein resides in the centromere. It localises to the kinetochore. Its subcellular location is the spindle. It is found in the golgi apparatus. The protein localises to the trans-Golgi network. Functionally, microtubule plus-end tracking protein that promotes the stabilization of dynamic microtubules during anaphase. Plays a crucial role in chromatin-induced microtubule formation. May also act at microtubule minus ends. May be involved in the nucleation of noncentrosomal microtubules originating from the trans-Golgi network (TGN). This chain is CLIP-associating protein 1-A (clasp1-a), found in Xenopus laevis (African clawed frog).